A 139-amino-acid chain; its full sequence is MYDCIFCKIINKELPSYKVYEDDLVLAFLDINPLTVGHTLVIPKEHSESLLNMDDKFNERVLKVCKKISNALKRINSSIYGGINIYSALGAGAGQEVFHTHFHVIPRFKNDGFGFKRGNKLNLEVEKFKELSMQISMNI.

The HIT domain occupies 5–114; sequence IFCKIINKEL…IPRFKNDGFG (110 aa). The short motif at 99-103 is the Histidine triad motif element; it reads HTHFH.

This is an uncharacterized protein from Borreliella burgdorferi (strain ATCC 35210 / DSM 4680 / CIP 102532 / B31) (Borrelia burgdorferi).